A 372-amino-acid chain; its full sequence is Aminomethyltransferase (372 aa).

Belongs to the GcvT family. In terms of assembly, the glycine cleavage system is composed of four proteins: P, T, L and H.

The catalysed reaction is N(6)-[(R)-S(8)-aminomethyldihydrolipoyl]-L-lysyl-[protein] + (6S)-5,6,7,8-tetrahydrofolate = N(6)-[(R)-dihydrolipoyl]-L-lysyl-[protein] + (6R)-5,10-methylene-5,6,7,8-tetrahydrofolate + NH4(+). The glycine cleavage system catalyzes the degradation of glycine. The chain is Aminomethyltransferase from Rubrobacter xylanophilus (strain DSM 9941 / JCM 11954 / NBRC 16129 / PRD-1).